Reading from the N-terminus, the 239-residue chain is Leucine-rich repeat-containing protein 57 (239 aa).

A lipid anchor (N-myristoyl glycine) is attached at G2. LRR repeat units lie at residues 39-60 (NLRTIDLSNNKIESLPPLLIGK), 63-84 (LLKSLSLNNNKLTVLPDEICNL), 86-107 (KLETLSLNNNHLRELPSTFGQL), 109-131 (ALKTLSLSGNQLGALPPQLCSLR), 132-153 (HLDVMDLSKNQIRSIPDSVGEL), 154-175 (QVIELNLNQNQISQISVKISCC), 177-197 (RLKILRLEENCLELSMLPQSI), and 202-222 (QICLLAVEGNLFEIKKLRELE).

It localises to the membrane. This is Leucine-rich repeat-containing protein 57 (LRRC57) from Homo sapiens (Human).